The primary structure comprises 4690 residues: Nonribosomal peptide synthetase sidN (4690 aa).

The adenylation 1 stretch occupies residues 238 to 656 (ARVRENPGRI…LGRLSSDQIK (419 aa)). In terms of domain architecture, Carrier 1 spans 779–856 (SSSIPMLQSV…DLDTKAQQAL (78 aa)). The residue at position 816 (serine 816) is an O-(pantetheine 4'-phosphoryl)serine. A condensation 1 region spans residues 924–1175 (APGGKAFIQH…AFGNTMSDRF (252 aa)). An adenylation 2 region spans residues 1349 to 1760 (EFAQKSPNAI…GRKDDLVKIR (412 aa)). The region spanning 1889–1965 (PAWCIKHRPL…DLINHLSVKR (77 aa)) is the Carrier 2 domain. Serine 1926 bears the O-(pantetheine 4'-phosphoryl)serine mark. Positions 2001-2285 (PTTVFQDGML…SERLLESQLV (285 aa)) are condensation 2. Residues 2464 to 2869 (TWAKTHPEWK…GRKDEQVKVR (406 aa)) form an adenylation 3 region. Residues 3002 to 3079 (RDLTSIEKQI…ELGRMKNALK (78 aa)) enclose the Carrier 3 domain. An O-(pantetheine 4'-phosphoryl)serine modification is found at serine 3040. The interval 3121 to 3530 (CMPLQEVLVA…QMESLVTSFT (410 aa)) is condensation 3. The Carrier 4 domain maps to 3564–3637 (SVLEQQIRDV…KLATHIQTTS (74 aa)). An O-(pantetheine 4'-phosphoryl)serine modification is found at serine 3598. Positions 3679–4087 (VYPLTPLQAG…FESIRKHPDE (409 aa)) are condensation 4. In terms of domain architecture, Carrier 5 spans 4119 to 4195 (SAIDQFLDPL…KLCEVAFAKS (77 aa)). Position 4156 is an O-(pantetheine 4'-phosphoryl)serine (serine 4156). Positions 4262–4589 (WVFKAENGLD…FNAHLNILWN (328 aa)) are condensation 5.

This sequence belongs to the NRP synthetase family.

The protein operates within siderophore biosynthesis. Nonribosomal peptide synthetase required for the biosynthetis of epichloenin A, an extracellular siderophore that plays a crucial role in endophyte-grass symbioses. SidN assembles epichloenin A by activating and incorporating three trans-anhydromevalonylhydroxyornithine (trans-AMHO), 1 glutamine and 4 glycine moieties. Trans-AMHO is produced from L-ornithine via 2 steps involving a L-ornithine N(5)-monooxygenase and an AHMO-N(5)-transacylase that have still to be identified. The third adenylation domain (A3) of sidN incorporates the hydroxamate groups of the siderophore which forms an octahedral iron complex. The other component amino acids are assembled by sidN adenylation domains A1 and A2. The polypeptide is Nonribosomal peptide synthetase sidN (Epichloe festucae (strain Fl1)).